The chain runs to 468 residues: E3 ubiquitin-protein ligase RGLG2 (468 aa).

Residues methionine 1–lysine 89 are disordered. The N-myristoyl glycine moiety is linked to residue glycine 2. Over residues glutamine 12–asparagine 45 the composition is skewed to low complexity. Pro residues predominate over residues tyrosine 46 to leucine 65. Residues tyrosine 66–tyrosine 84 show a composition bias toward low complexity. The VWFA domain occupies asparagine 122 to leucine 342. The interval phenylalanine 369–threonine 416 is disordered. The RING-type zinc-finger motif lies at cysteine 425–arginine 458.

In terms of assembly, interacts with the heterodimer UBC35/UEV1B, UBC35 alone, PIN1, but not with UCB2, UCB9, UEV1B or UEV1C alone. Interacts with ERF053. In terms of processing, N-myristoylated. As to expression, ubiquitously expressed.

It is found in the cell membrane. The protein resides in the nucleus. It catalyses the reaction S-ubiquitinyl-[E2 ubiquitin-conjugating enzyme]-L-cysteine + [acceptor protein]-L-lysine = [E2 ubiquitin-conjugating enzyme]-L-cysteine + N(6)-ubiquitinyl-[acceptor protein]-L-lysine.. Functionally, E3 ubiquitin-protein ligase that mediates the formation of 'Lys-63'-linked ubiquitin chains. Regulates apical dominance by acting on the auxin transport proteins abundance. Mediates ubiquitination and subsequent proteasomal degradation of ERF053 in response to drought stress. Acts as a negative regulator of drought stress response. The polypeptide is E3 ubiquitin-protein ligase RGLG2 (Arabidopsis thaliana (Mouse-ear cress)).